Reading from the N-terminus, the 398-residue chain is Acetate kinase 1 (398 aa).

A Mg(2+)-binding site is contributed by Asn9. Lys16 is a binding site for ATP. Position 89 (Arg89) interacts with substrate. Asp146 functions as the Proton donor/acceptor in the catalytic mechanism. ATP-binding positions include 206–210, 281–283, and 329–333; these read HLGNG, DCR, and GIGEN. Mg(2+) is bound at residue Glu384.

Belongs to the acetokinase family. Homodimer. Mg(2+) is required as a cofactor. Mn(2+) serves as cofactor.

It is found in the cytoplasm. The enzyme catalyses acetate + ATP = acetyl phosphate + ADP. The protein operates within metabolic intermediate biosynthesis; acetyl-CoA biosynthesis; acetyl-CoA from acetate: step 1/2. In terms of biological role, catalyzes the formation of acetyl phosphate from acetate and ATP. Can also catalyze the reverse reaction. This chain is Acetate kinase 1, found in Vibrio cholerae serotype O1 (strain ATCC 39315 / El Tor Inaba N16961).